Consider the following 290-residue polypeptide: Nucleotide-binding protein Sde_3181 (290 aa).

8–15 serves as a coordination point for ATP; that stretch reads GRSGSGKT. 60–63 provides a ligand contact to GTP; the sequence is DARN.

This sequence belongs to the RapZ-like family.

Its function is as follows. Displays ATPase and GTPase activities. The sequence is that of Nucleotide-binding protein Sde_3181 from Saccharophagus degradans (strain 2-40 / ATCC 43961 / DSM 17024).